The following is a 242-amino-acid chain: Tryptophan synthase alpha chain (242 aa).

Catalysis depends on proton acceptor residues E31 and D42.

The protein belongs to the TrpA family. As to quaternary structure, tetramer of two alpha and two beta chains.

The catalysed reaction is (1S,2R)-1-C-(indol-3-yl)glycerol 3-phosphate + L-serine = D-glyceraldehyde 3-phosphate + L-tryptophan + H2O. It functions in the pathway amino-acid biosynthesis; L-tryptophan biosynthesis; L-tryptophan from chorismate: step 5/5. In terms of biological role, the alpha subunit is responsible for the aldol cleavage of indoleglycerol phosphate to indole and glyceraldehyde 3-phosphate. This Staphylococcus aureus (strain Mu3 / ATCC 700698) protein is Tryptophan synthase alpha chain.